We begin with the raw amino-acid sequence, 361 residues long: Ribosomal RNA large subunit methyltransferase M (361 aa).

Residues serine 193, 226–229 (CPGG), aspartate 245, aspartate 265, and aspartate 283 each bind S-adenosyl-L-methionine. Lysine 312 functions as the Proton acceptor in the catalytic mechanism.

This sequence belongs to the class I-like SAM-binding methyltransferase superfamily. RNA methyltransferase RlmE family. RlmM subfamily. Monomer.

The protein resides in the cytoplasm. It catalyses the reaction cytidine(2498) in 23S rRNA + S-adenosyl-L-methionine = 2'-O-methylcytidine(2498) in 23S rRNA + S-adenosyl-L-homocysteine + H(+). Catalyzes the 2'-O-methylation at nucleotide C2498 in 23S rRNA. The chain is Ribosomal RNA large subunit methyltransferase M from Histophilus somni (strain 2336) (Haemophilus somnus).